The chain runs to 420 residues: Anaerobic glycerol-3-phosphate dehydrogenase subunit B (420 aa).

It belongs to the anaerobic G-3-P dehydrogenase subunit B family. In terms of assembly, composed of a catalytic GlpA/B dimer and of membrane bound GlpC. Requires FMN as cofactor.

The catalysed reaction is a quinone + sn-glycerol 3-phosphate = dihydroxyacetone phosphate + a quinol. It participates in polyol metabolism; glycerol degradation via glycerol kinase pathway; glycerone phosphate from sn-glycerol 3-phosphate (anaerobic route): step 1/1. Conversion of glycerol 3-phosphate to dihydroxyacetone. Uses fumarate or nitrate as electron acceptor. The polypeptide is Anaerobic glycerol-3-phosphate dehydrogenase subunit B (Pectobacterium carotovorum subsp. carotovorum (strain PC1)).